A 1086-amino-acid chain; its full sequence is Bifunctional helicase and thymine dioxygenase JBP2 (1086 aa).

Positions 1-518 are thymine dioxygenase; sequence MPVPSHVSVA…PPIYLPGRLL (518 aa). Residues 187-220 form a disordered region; it reads DESNRGVLFNSDSFGNGRGGSSISSSERSVDEND. Fe cation contacts are provided by His-393, Asp-395, and His-443. Arg-457 lines the 2-oxoglutarate pocket. A DNA Helicase region spans residues 519–1084; sequence EVLSPVQQAA…RHGDTVRSES (566 aa). The region spanning 533 to 708 is the Helicase ATP-binding domain; that stretch reads VDRLSKGNGC…YRLIGWINSD (176 aa). Residue 546–553 participates in ATP binding; that stretch reads LTMGLGKT. The DEAH box signature appears at 659-662; sequence DEGH. Residues 883 to 1041 enclose the Helicase C-terminal domain; sequence VLISILHSIR…RAVPPEELLD (159 aa).

The protein in the C-terminal section; belongs to the SNF2/RAD54 helicase family. In the N-terminal section; belongs to the TET family. JBP2 subfamily. Fe(2+) serves as cofactor.

It localises to the nucleus. It catalyses the reaction ATP + H2O = ADP + phosphate + H(+). The catalysed reaction is thymine + 2-oxoglutarate + O2 = 5-hydroxymethyluracil + succinate + CO2. In terms of biological role, dioxygenase that catalyzes the first step of DNA base J (beta-d-glucosyl-HOMedU) biosynthesis by converting thymine to 5-hydroxymethyluracil (HOMedU). DNA base J is a hypermodified thymidine residue found in the genome of kinetoplastid parasites, which is localized primarily to repetitive DNA, namely the telomeres, and is implicated in the regulation of antigenic variation. Probably also acts as a DNA helicase. Recognizes and binds specific regions of the genome, hydrolyzes ATP and allows the DNA base J de novo synthesis. Involved in initial synthesis of DNA base J, JBP1 being able to act via the basal level of DNA base J and propagate further synthesis. In contrast to JBP1, it does not specifically bind DNA base J, however it binds chromatin. This chain is Bifunctional helicase and thymine dioxygenase JBP2 (JBP2), found in Trypanosoma cruzi (strain CL Brener).